A 213-amino-acid chain; its full sequence is Redox-sensing transcriptional repressor Rex (213 aa).

A DNA-binding region (H-T-H motif) is located at residues Leu18–Phe57. An NAD(+)-binding site is contributed by Gly92–Gly97.

The protein belongs to the transcriptional regulatory Rex family. In terms of assembly, homodimer.

It is found in the cytoplasm. Functionally, modulates transcription in response to changes in cellular NADH/NAD(+) redox state. The polypeptide is Redox-sensing transcriptional repressor Rex (Geobacillus kaustophilus (strain HTA426)).